Here is a 337-residue protein sequence, read N- to C-terminus: ATP-dependent 6-phosphofructokinase (337 aa).

Residue glycine 11 coordinates ATP. 21–25 is an ADP binding site; sequence RAVVR. ATP-binding positions include 72–73 and 102–105; these read RY and GDGS. Aspartate 103 is a binding site for Mg(2+). Substrate is bound at residue 125–127; the sequence is TID. Aspartate 127 (proton acceptor) is an active-site residue. Arginine 154 is a binding site for ADP. Substrate-binding positions include arginine 162 and 169 to 171; that span reads MGR. ADP is bound by residues 185 to 187, lysine 212, and 214 to 216; these read GAD and KNH. Substrate contacts are provided by residues glutamate 223, arginine 245, and 251-254; that span reads HILR.

The protein belongs to the phosphofructokinase type A (PFKA) family. ATP-dependent PFK group I subfamily. Prokaryotic clade 'B1' sub-subfamily. As to quaternary structure, homotetramer. Mg(2+) is required as a cofactor.

Its subcellular location is the cytoplasm. It catalyses the reaction beta-D-fructose 6-phosphate + ATP = beta-D-fructose 1,6-bisphosphate + ADP + H(+). It functions in the pathway carbohydrate degradation; glycolysis; D-glyceraldehyde 3-phosphate and glycerone phosphate from D-glucose: step 3/4. Its activity is regulated as follows. Allosterically activated by ADP and other diphosphonucleosides, and allosterically inhibited by phosphoenolpyruvate. In terms of biological role, catalyzes the phosphorylation of D-fructose 6-phosphate to fructose 1,6-bisphosphate by ATP, the first committing step of glycolysis. The polypeptide is ATP-dependent 6-phosphofructokinase (Streptococcus pyogenes serotype M28 (strain MGAS6180)).